We begin with the raw amino-acid sequence, 133 residues long: Nucleoside diphosphate kinase (133 aa).

Positions 9, 57, 85, 91, 102, and 112 each coordinate ATP. His115 functions as the Pros-phosphohistidine intermediate in the catalytic mechanism.

It belongs to the NDK family. As to quaternary structure, homotetramer. The cofactor is Mg(2+).

It localises to the cytoplasm. It carries out the reaction a 2'-deoxyribonucleoside 5'-diphosphate + ATP = a 2'-deoxyribonucleoside 5'-triphosphate + ADP. The catalysed reaction is a ribonucleoside 5'-diphosphate + ATP = a ribonucleoside 5'-triphosphate + ADP. Its function is as follows. Major role in the synthesis of nucleoside triphosphates other than ATP. The ATP gamma phosphate is transferred to the NDP beta phosphate via a ping-pong mechanism, using a phosphorylated active-site intermediate. This chain is Nucleoside diphosphate kinase, found in Rubrobacter xylanophilus (strain DSM 9941 / JCM 11954 / NBRC 16129 / PRD-1).